A 36-amino-acid chain; its full sequence is ACENNFSDRECERRKKDCDSSMKFRELSCPKTCGTC.

The ShKT domain occupies 2–36 (CENNFSDRECERRKKDCDSSMKFRELSCPKTCGTC). 3 cysteine pairs are disulfide-bonded: C2-C36, C11-C29, and C18-C33.

This sequence belongs to the sea anemone type 1 potassium channel toxin family. Type 1a subfamily. In terms of tissue distribution, predominantly expressed in mesenterial filaments (at protein level), a morphological structure that has a functional role in prey killing and digestion. Also expressed in club-tips, tentacles, actinopharynx, body column, mesenterial filaments and pedal disk.

Its subcellular location is the secreted. It localises to the nematocyst. Its function is as follows. Probable toxin with unknown function. Does not inhibit all channels tested. Is not cytotoxic on macrophage. The protein is Kappa-isophellitoxin-Tst1a of Telmatactis stephensoni (Sea anemone).